We begin with the raw amino-acid sequence, 227 residues long: MKEKIGMMLSDVDLEWLKKKYCIKNKGKFLKIGLTGGIGSGKSTISKMFKNMGIDVIDADKIAREVLEKYPPILEYIEENFGEQYIDEFGNLNRREFGNHIFSISKKEREKYENIIIPYIKLEIENQFKLYEKIGKKVCLLDAPLLIEQDMQKDLDFTVLSWVNKETQIKRVGIRDNLSEDEILNRIEAQISLDKKRELVDFIIDNSNTIEETRVQVEKLFQFINCL.

In terms of domain architecture, DPCK spans 31-227; it reads KIGLTGGIGS…EKLFQFINCL (197 aa). 39–44 provides a ligand contact to ATP; sequence GSGKST.

The protein belongs to the CoaE family.

The protein resides in the cytoplasm. The enzyme catalyses 3'-dephospho-CoA + ATP = ADP + CoA + H(+). It functions in the pathway cofactor biosynthesis; coenzyme A biosynthesis; CoA from (R)-pantothenate: step 5/5. Functionally, catalyzes the phosphorylation of the 3'-hydroxyl group of dephosphocoenzyme A to form coenzyme A. This Clostridium tetani (strain Massachusetts / E88) protein is Dephospho-CoA kinase.